A 259-amino-acid chain; its full sequence is uncharacterized protein (259 aa).

The signal sequence occupies residues 1–22; the sequence is MKHSSKIIVFVSFLILTIFIGG. Cys-23 carries N-palmitoyl cysteine lipidation. Residue Cys-23 is the site of S-diacylglycerol cysteine attachment.

The protein belongs to the staphylococcal tandem lipoprotein family.

The protein resides in the cell membrane. This is an uncharacterized protein from Staphylococcus epidermidis (strain ATCC 35984 / DSM 28319 / BCRC 17069 / CCUG 31568 / BM 3577 / RP62A).